The chain runs to 701 residues: CRS2-associated factor 1, chloroplastic (701 aa).

A chloroplast-targeting transit peptide spans Met1–Asn37. Disordered regions lie at residues Val68–Lys136 and Leu191–Gly221. CRM domains lie at Glu241 to Arg337 and Glu359 to Pro455. The tract at residues Leu471 to Val532 is disordered. 2 stretches are compositionally biased toward polar residues: residues Val479–Pro492 and Thr520–Lys530. The interval Arg564–Leu586 is CRS2 binding.

Interacts with CRS2 and RNA. Part of large ribonucleo-protein complexes that include group IIB introns, CRS2 and CAF1.

The protein resides in the plastid. It is found in the chloroplast stroma. Functionally, required for the splicing of group IIB introns in chloroplasts. Forms splicing particles with CRS2. Interacts with RNA and confers intron specificity of the splicing particles. This chain is CRS2-associated factor 1, chloroplastic, found in Arabidopsis thaliana (Mouse-ear cress).